Reading from the N-terminus, the 781-residue chain is AP-3 complex subunit beta (781 aa).

HEAT repeat units follow at residues 113 to 151 (PNLA…ASLY), 153 to 186 (IILH…EQGI), 187 to 224 (SIKD…QELQ), 294 to 332 (DHDL…PKTF), and 521 to 559 (PRIC…HDVD). 2 disordered regions span residues 694–713 (KPKR…TSSH) and 731–781 (ARQS…ETTE). Polar residues predominate over residues 699–712 (ASVSSVPSNTFTSS). Acidic residues predominate over residues 746–758 (STSEETDHTDDES). A compositionally biased stretch (low complexity) spans 759–774 (GSSSGDESTESSYVSS).

It belongs to the adaptor complexes large subunit family. Adaptor protein complex 3 (AP-3) is a heterotetramer composed of 2 large adaptins (APL5 and APL6), a medium adaptin (APM3) and a small adaptin (APS3).

The protein resides in the golgi apparatus. It localises to the cytoplasmic vesicle. The protein localises to the clathrin-coated vesicle membrane. Functionally, part of the AP-3 complex, an adaptor-related complex which is not clathrin-associated. The complex is associated with the Golgi region as well as more peripheral structures. It facilitates the budding of vesicles from the Golgi membrane and may be directly involved in trafficking to the vacuole. This is AP-3 complex subunit beta (APL6) from Eremothecium gossypii (strain ATCC 10895 / CBS 109.51 / FGSC 9923 / NRRL Y-1056) (Yeast).